The sequence spans 381 residues: Dof zinc finger protein 2 (381 aa).

Positions 19 to 81 (MLMGANPNPN…ARPQKEKALN (63 aa)) are disordered. 2 stretches are compositionally biased toward low complexity: residues 23 to 32 (ANPNPNGSSN) and 40 to 59 (SAAS…AAGA). Residues 68–79 (TERRARPQKEKA) are compositionally biased toward basic and acidic residues. The segment at 80 to 134 (LNCPRCNSTNTKFCYYNNYSLQQPRYFCKTCRRYWTEGGSLRNVPVGGGSRKNKR) adopts a Dof-type zinc-finger fold. 4 residues coordinate Zn(2+): C82, C85, C107, and C110. Positions 329–349 (AGDANSGGDHQYDHGKNQGGG) are disordered.

It localises to the nucleus. Transcription factor that may transactivate seed storage protein genes in developing seeds. This is Dof zinc finger protein 2 from Oryza sativa subsp. japonica (Rice).